Consider the following 89-residue polypeptide: Cornifin-A (89 aa).

The interval 1–29 is disordered; it reads MNSQQQKQPCTPPPQPQQQQVKQPCQPPP. 8 consecutive repeat copies span residues 3–14, 18–29, 31–38, 39–46, 47–54, 55–62, 63–70, and 71–78. The 2 X 12 AA approximate repeats stretch occupies residues 3 to 29; that stretch reads SQQQKQPCTPPPQPQQQQVKQPCQPPP. The segment at 31-78 is 6 X 8 AA approximate tandem repeats; that stretch reads EPCIPKTKEPCHPKVPEPCHPKVPEPCQPKVPEPCQPKVPEPCPSTVT. The tract at residues 68–89 is disordered; sequence KVPEPCPSTVTPAPAQQKTKQK. The segment covering 75–89 has biased composition (polar residues); sequence STVTPAPAQQKTKQK.

It belongs to the cornifin (SPRR) family.

It localises to the cytoplasm. Cross-linked envelope protein of keratinocytes. It is a keratinocyte protein that first appears in the cell cytosol, but ultimately becomes cross-linked to membrane proteins by transglutaminase. All that results in the formation of an insoluble envelope beneath the plasma membrane. This Homo sapiens (Human) protein is Cornifin-A (SPRR1A).